The sequence spans 153 residues: 6,7-dimethyl-8-ribityllumazine synthase (153 aa).

Residues F22, 56 to 58 (AFE), and 80 to 82 (TVI) each bind 5-amino-6-(D-ribitylamino)uracil. 85 to 86 (AT) provides a ligand contact to (2S)-2-hydroxy-3-oxobutyl phosphate. The active-site Proton donor is H88. F113 contributes to the 5-amino-6-(D-ribitylamino)uracil binding site. A (2S)-2-hydroxy-3-oxobutyl phosphate-binding site is contributed by R127.

This sequence belongs to the DMRL synthase family.

It catalyses the reaction (2S)-2-hydroxy-3-oxobutyl phosphate + 5-amino-6-(D-ribitylamino)uracil = 6,7-dimethyl-8-(1-D-ribityl)lumazine + phosphate + 2 H2O + H(+). The protein operates within cofactor biosynthesis; riboflavin biosynthesis; riboflavin from 2-hydroxy-3-oxobutyl phosphate and 5-amino-6-(D-ribitylamino)uracil: step 1/2. Its function is as follows. Catalyzes the formation of 6,7-dimethyl-8-ribityllumazine by condensation of 5-amino-6-(D-ribitylamino)uracil with 3,4-dihydroxy-2-butanone 4-phosphate. This is the penultimate step in the biosynthesis of riboflavin. The polypeptide is 6,7-dimethyl-8-ribityllumazine synthase (Clostridium perfringens (strain ATCC 13124 / DSM 756 / JCM 1290 / NCIMB 6125 / NCTC 8237 / Type A)).